The primary structure comprises 174 residues: Shikimate kinase 2 (174 aa).

G12–T17 contributes to the ATP binding site. Mg(2+) contacts are provided by T16 and D32. Residues D34, R58, and G79 each contribute to the substrate site. The tract at residues E112 to K126 is LID domain. An ATP-binding site is contributed by R120. Substrate is bound at residue R139. Position 155 (Q155) interacts with ATP.

The protein belongs to the shikimate kinase family. AroL subfamily. Monomer. Requires Mg(2+) as cofactor.

The protein resides in the cytoplasm. It carries out the reaction shikimate + ATP = 3-phosphoshikimate + ADP + H(+). The protein operates within metabolic intermediate biosynthesis; chorismate biosynthesis; chorismate from D-erythrose 4-phosphate and phosphoenolpyruvate: step 5/7. Catalyzes the specific phosphorylation of the 3-hydroxyl group of shikimic acid using ATP as a cosubstrate. The protein is Shikimate kinase 2 of Enterobacter sp. (strain 638).